The sequence spans 481 residues: Protein hedgehog (481 aa).

Positions 1 to 19 (MDNQAVSALWSCASATCLS) are cleaved as a signal peptide. A propeptide spanning residues 20–90 (LDAKRHSIEP…LALNFRHAHS (71 aa)) is cleaved from the precursor. Residues 26 to 56 (SIEPNPDGQASPDVNNNNNNHNKSTTTVDAH) are disordered. A lipid anchor (N-palmitoyl cysteine) is attached at C91. E155, E156, D161, T191, E192, D195, and D197 together coordinate Ca(2+). G264 is lipidated: Cholesterol glycine ester.

Belongs to the hedgehog family. Interacts with shf. Post-translationally, the C-terminal part of the hedgehog protein precursor displays an autoproteolysis activity that results in the cleavage of the full-length protein into two parts (N-product and C-product). In addition, the C-terminal part displays a cholesterol transferase activity that results by the covalent attachment of a cholesterol moiety to the C-terminal of the newly generated N-product. The N-product is the active species in both local and long-range signaling, whereas the C-product has no signaling activity. In terms of processing, cholesterylation is required for N-product targeting to lipid rafts and multimerization. N-palmitoylation by Rasp of the hedgehog N-product, within the secretory pathway, is required for the embryonic and larval patterning activities of the hedgehog signal.

It localises to the nucleus. Its subcellular location is the cytoplasm. The protein localises to the cell membrane. The enzyme catalyses glycyl-L-cysteinyl-[protein] + cholesterol + H(+) = [protein]-C-terminal glycyl cholesterol ester + N-terminal L-cysteinyl-[protein]. Functionally, the C-terminal part of the hedgehog protein precursor displays an autoproteolysis activity that results in the cleavage of the full-length protein into two parts (N-product and C-product). In addition, the C-terminal part displays a cholesterol transferase activity that results by the covalent attachment of a cholesterol moiety to the C-terminal of the newly generated N-product. Once cleaved, the C-product has no signaling activity and diffuses from the cell. Its function is as follows. The dually lipidated hedgehog protein N-product is a morphogen which is essential for a variety of patterning events during development. Establishes the anterior-posterior axis of the embryonic segments and patterns the larval imaginal disks. Binds to the patched (ptc) receptor, which functions in association with smoothened (smo), to activate the transcription of target genes wingless (wg), decapentaplegic (dpp) and ptc. In the absence of hh, ptc represses the constitutive signaling activity of smo through fused (fu). Essential component of a signaling pathway which regulates the Duox-dependent gut immune response to bacterial uracil; required to activate Cad99C-dependent endosome formation, norpA-dependent Ca2+ mobilization and p38 MAPK, which are essential steps in the Duox-dependent production of reactive oxygen species (ROS) in response to intestinal bacterial infection. During photoreceptor differentiation, it up-regulates transcription of Ubr3, which in turn promotes the hh-signaling pathway by mediating the ubiquitination and degradation of cos. The sequence is that of Protein hedgehog from Drosophila hydei (Fruit fly).